The primary structure comprises 319 residues: Na(+)-translocating NADH-quinone reductase subunit C (319 aa).

A helical transmembrane segment spans residues 14 to 34; the sequence is WYVILFIFALSLFSSVFLSTV. An FMN phosphoryl threonine modification is found at Thr283.

The protein belongs to the NqrC family. Composed of six subunits; NqrA, NqrB, NqrC, NqrD, NqrE and NqrF. It depends on FMN as a cofactor.

Its subcellular location is the cell inner membrane. The enzyme catalyses a ubiquinone + n Na(+)(in) + NADH + H(+) = a ubiquinol + n Na(+)(out) + NAD(+). NQR complex catalyzes the reduction of ubiquinone-1 to ubiquinol by two successive reactions, coupled with the transport of Na(+) ions from the cytoplasm to the periplasm. NqrA to NqrE are probably involved in the second step, the conversion of ubisemiquinone to ubiquinol. The chain is Na(+)-translocating NADH-quinone reductase subunit C from Chlamydia caviae (strain ATCC VR-813 / DSM 19441 / 03DC25 / GPIC) (Chlamydophila caviae).